The sequence spans 362 residues: Ferrochelatase (362 aa).

Positions 212 and 294 each coordinate Fe cation.

Belongs to the ferrochelatase family.

Its subcellular location is the cytoplasm. It catalyses the reaction heme b + 2 H(+) = protoporphyrin IX + Fe(2+). It functions in the pathway porphyrin-containing compound metabolism; protoheme biosynthesis; protoheme from protoporphyrin-IX: step 1/1. Catalyzes the ferrous insertion into protoporphyrin IX. In Leptospira biflexa, this protein is Ferrochelatase.